A 546-amino-acid polypeptide reads, in one-letter code: Chaperonin GroEL 4 (546 aa).

ATP-binding positions include 30 to 33 (TLGP), lysine 51, 87 to 91 (DGTTT), glycine 415, and aspartate 496.

This sequence belongs to the chaperonin (HSP60) family. In terms of assembly, forms a cylinder of 14 subunits composed of two heptameric rings stacked back-to-back. Interacts with the co-chaperonin GroES.

It is found in the cytoplasm. It catalyses the reaction ATP + H2O + a folded polypeptide = ADP + phosphate + an unfolded polypeptide.. Its function is as follows. Together with its co-chaperonin GroES, plays an essential role in assisting protein folding. The GroEL-GroES system forms a nano-cage that allows encapsulation of the non-native substrate proteins and provides a physical environment optimized to promote and accelerate protein folding. The polypeptide is Chaperonin GroEL 4 (Bradyrhizobium sp. (strain BTAi1 / ATCC BAA-1182)).